Consider the following 427-residue polypeptide: UDP-N-acetylglucosamine--N-acetylmuramyl-(pentapeptide) pyrophosphoryl-undecaprenol N-acetylglucosamine transferase (427 aa).

UDP-N-acetyl-alpha-D-glucosamine-binding positions include 29-31 (TGG), N141, R177, S205, I258, and Q303. Residues 408-427 (SLHPIPDSRFPIRTSAGGAQ) form a disordered region.

This sequence belongs to the glycosyltransferase 28 family. MurG subfamily.

It is found in the cell inner membrane. It carries out the reaction di-trans,octa-cis-undecaprenyl diphospho-N-acetyl-alpha-D-muramoyl-L-alanyl-D-glutamyl-meso-2,6-diaminopimeloyl-D-alanyl-D-alanine + UDP-N-acetyl-alpha-D-glucosamine = di-trans,octa-cis-undecaprenyl diphospho-[N-acetyl-alpha-D-glucosaminyl-(1-&gt;4)]-N-acetyl-alpha-D-muramoyl-L-alanyl-D-glutamyl-meso-2,6-diaminopimeloyl-D-alanyl-D-alanine + UDP + H(+). The protein operates within cell wall biogenesis; peptidoglycan biosynthesis. Cell wall formation. Catalyzes the transfer of a GlcNAc subunit on undecaprenyl-pyrophosphoryl-MurNAc-pentapeptide (lipid intermediate I) to form undecaprenyl-pyrophosphoryl-MurNAc-(pentapeptide)GlcNAc (lipid intermediate II). The chain is UDP-N-acetylglucosamine--N-acetylmuramyl-(pentapeptide) pyrophosphoryl-undecaprenol N-acetylglucosamine transferase from Xanthomonas campestris pv. campestris (strain B100).